The following is a 258-amino-acid chain: Imidazole glycerol phosphate synthase subunit HisF (258 aa).

Active-site residues include Asp11 and Asp130.

This sequence belongs to the HisA/HisF family. Heterodimer of HisH and HisF.

It localises to the cytoplasm. The catalysed reaction is 5-[(5-phospho-1-deoxy-D-ribulos-1-ylimino)methylamino]-1-(5-phospho-beta-D-ribosyl)imidazole-4-carboxamide + L-glutamine = D-erythro-1-(imidazol-4-yl)glycerol 3-phosphate + 5-amino-1-(5-phospho-beta-D-ribosyl)imidazole-4-carboxamide + L-glutamate + H(+). The protein operates within amino-acid biosynthesis; L-histidine biosynthesis; L-histidine from 5-phospho-alpha-D-ribose 1-diphosphate: step 5/9. Its function is as follows. IGPS catalyzes the conversion of PRFAR and glutamine to IGP, AICAR and glutamate. The HisF subunit catalyzes the cyclization activity that produces IGP and AICAR from PRFAR using the ammonia provided by the HisH subunit. This is Imidazole glycerol phosphate synthase subunit HisF from Methylorubrum extorquens (strain PA1) (Methylobacterium extorquens).